Consider the following 307-residue polypeptide: Bifunctional protein FolD (307 aa).

NADP(+)-binding positions include 165–167 (GRS), Ser-190, and Ile-231.

The protein belongs to the tetrahydrofolate dehydrogenase/cyclohydrolase family. Homodimer.

The catalysed reaction is (6R)-5,10-methylene-5,6,7,8-tetrahydrofolate + NADP(+) = (6R)-5,10-methenyltetrahydrofolate + NADPH. The enzyme catalyses (6R)-5,10-methenyltetrahydrofolate + H2O = (6R)-10-formyltetrahydrofolate + H(+). It participates in one-carbon metabolism; tetrahydrofolate interconversion. In terms of biological role, catalyzes the oxidation of 5,10-methylenetetrahydrofolate to 5,10-methenyltetrahydrofolate and then the hydrolysis of 5,10-methenyltetrahydrofolate to 10-formyltetrahydrofolate. The protein is Bifunctional protein FolD of Koribacter versatilis (strain Ellin345).